A 431-amino-acid polypeptide reads, in one-letter code: MIRRWLTSRLYDAFLVCAFFVSAPRIFYKVFFHGKYIDSWKIRFGVQKPFVKGEGPLVWFHGASVGEVSLLAPLLNRWREEFPEWRFVVTTCSEAGVHTARRLYESLGATVFVLPLDLSCIIKSVVRKLAPDIVIFSEGDCWLHFLTESKRLGAKAFLINGKLSEHSCKRFSFLKRLGRNYFAPLDLLILQDELYKQRFMQIGISSDKIHVTGNMKTFIESSLATNRRDFWRAKLQISSQDRLIVLGSMHPKDVEVWAEVVSHFHNSSTKILWVPRHLEKLKEHAKLLEKAGILFGLWSQGASFRQYNSLIMDAMGVLKDIYSAADIAFVGGTFDPSVGGHNLLEPLQKEVPLMFGPYIYSQSVLAEKLREKEAGLSVNKETLLDVVTDLLQNEKNRQAYIEKGKSFLKQEENSFQQTWEILKSQITCMKI.

A helical; Signal-anchor transmembrane segment spans residues 5–27 (WLTSRLYDAFLVCAFFVSAPRIF). The active-site Proton acceptor is the E67. CMP contacts are provided by residues 275–276 (PR), 315–317 (MGV), and 342–345 (NLLE).

It belongs to the glycosyltransferase group 1 family. Glycosyltransferase 30 subfamily.

It is found in the cell inner membrane. It carries out the reaction lipid IVA (E. coli) + CMP-3-deoxy-beta-D-manno-octulosonate = alpha-Kdo-(2-&gt;6)-lipid IVA (E. coli) + CMP + H(+). The catalysed reaction is alpha-Kdo-(2-&gt;6)-lipid IVA (E. coli) + CMP-3-deoxy-beta-D-manno-octulosonate = alpha-Kdo-(2-&gt;4)-alpha-Kdo-(2-&gt;6)-lipid IVA (E. coli) + CMP + H(+). It catalyses the reaction alpha-Kdo-(2-&gt;4)-alpha-Kdo-(2-&gt;6)-lipid IVA (E. coli) + CMP-3-deoxy-beta-D-manno-octulosonate = alpha-Kdo-(2-&gt;8)-alpha-Kdo-(2-&gt;4)-alpha-Kdo-(2-&gt;6)-lipid IVA (E. coli) + CMP + H(+). It functions in the pathway bacterial outer membrane biogenesis; LPS core biosynthesis. Functionally, involved in lipopolysaccharide (LPS) biosynthesis. Catalyzes the transfer of three 3-deoxy-D-manno-octulosonate (Kdo) residues from CMP-Kdo to lipid IV(A), the tetraacyldisaccharide-1,4'-bisphosphate precursor of lipid A. Thus generates the genus-specific LPS epitope of Chlamydia, composed of the trisaccharide alpha-Kdo-(2-&gt;8)-alpha-Kdo-(2-&gt;4)-alpha-Kdo. The sequence is that of 3-deoxy-D-manno-octulosonic acid transferase (waaA) from Chlamydia trachomatis serovar D (strain ATCC VR-885 / DSM 19411 / UW-3/Cx).